The sequence spans 254 residues: Pectate lyase E (254 aa).

The N-terminal stretch at 1–17 (MYQPLLLLPLLLTSAFA) is a signal peptide. The tract at residues 227-254 (TNNNSKEPKKKSSGPSSYCKYSEPLSKC) is disordered. N-linked (GlcNAc...) asparagine glycosylation occurs at N229. The segment covering 239–254 (SGPSSYCKYSEPLSKC) has biased composition (low complexity).

This sequence belongs to the polysaccharide lyase 3 family. Ca(2+) serves as cofactor.

It localises to the secreted. It carries out the reaction Eliminative cleavage of (1-&gt;4)-alpha-D-galacturonan to give oligosaccharides with 4-deoxy-alpha-D-galact-4-enuronosyl groups at their non-reducing ends.. In terms of biological role, pectinolytic enzyme consist of four classes of enzymes: pectin lyase, polygalacturonase, pectin methylesterase and rhamnogalacturonase. Among pectinolytic enzymes, pectin lyase is the most important in depolymerization of pectin, since it cleaves internal glycosidic bonds of highly methylated pectins. Favors pectate, the anion, over pectin, the methyl ester. The chain is Pectate lyase E (plyE) from Emericella nidulans (strain FGSC A4 / ATCC 38163 / CBS 112.46 / NRRL 194 / M139) (Aspergillus nidulans).